Reading from the N-terminus, the 250-residue chain is Membrane-spanning 4-domains subfamily A member 8 (250 aa).

The Cytoplasmic portion of the chain corresponds to 1–74 (MNSMTSAVPV…ALKEGKTLGA (74 aa)). A helical membrane pass occupies residues 75–95 (IQIIIGLAHIGLGSIMATVLV). At 96–98 (GEY) the chain is on the extracellular side. A helical transmembrane segment spans residues 99 to 119 (LSISFYGGFPFWGGLWFIISG). The Cytoplasmic portion of the chain corresponds to 120–136 (SLSVAAENQPYSYCLLS). A helical membrane pass occupies residues 137-157 (GSLGLNIVSAICSAVGVILFI). The Extracellular segment spans residues 158–180 (TDLSIPHPYAYPDYYPYAWGVNP). A helical transmembrane segment spans residues 181 to 201 (GMAISGVLLVFCLLEFGIACA). The Cytoplasmic segment spans residues 202 to 250 (SSHFGCQLVCCQSSNVSVIYPNIYAANPVITPEPVTSPPSYSSEIQANK).

It belongs to the MS4A family. In terms of tissue distribution, expressed by hematopoietic tissues and cells lines.

The protein localises to the membrane. May be involved in signal transduction as a component of a multimeric receptor complex. This is Membrane-spanning 4-domains subfamily A member 8 (MS4A8) from Homo sapiens (Human).